Here is a 791-residue protein sequence, read N- to C-terminus: Calcium-transporting ATPase CtpE (791 aa).

Transmembrane regions (helical) follow at residues Leu53–Ile73, Ile213–Leu233, and Val252–Val272. Asp299 serves as the catalytic 4-aspartylphosphate intermediate. Positions 299, 301, and 530 each coordinate Mg(2+). The next 6 membrane-spanning stretches (helical) occupy residues Val596 to Gly616, Ile627 to Ala647, Ala664 to Tyr684, Ala697 to Ala717, Val725 to Gln745, and Val757 to Trp777.

This sequence belongs to the cation transport ATPase (P-type) (TC 3.A.3) family.

The protein resides in the cell membrane. The enzyme catalyses Ca(2+)(in) + ATP + H2O = Ca(2+)(out) + ADP + phosphate + H(+). In terms of biological role, P-type ATPase involved in specific uptake of calcium. Essential for growth and maintenance of cell surface integrity under Ca(2+)-deficient conditions. This is Calcium-transporting ATPase CtpE from Mycolicibacterium smegmatis (strain ATCC 700084 / mc(2)155) (Mycobacterium smegmatis).